A 251-amino-acid chain; its full sequence is Flap endonuclease Xni (251 aa).

D104 provides a ligand contact to Mg(2+). One can recognise a 5'-3' exonuclease domain in the interval 160–249; it reads VLPRQLPDYW…IDGNLQQLRL (90 aa). 5 residues coordinate K(+): L171, A172, P180, V182, and I185. Positions 184–189 are interaction with DNA; the sequence is GIGPKS.

Belongs to the Xni family. Requires Mg(2+) as cofactor. K(+) is required as a cofactor.

Functionally, has flap endonuclease activity. During DNA replication, flap endonucleases cleave the 5'-overhanging flap structure that is generated by displacement synthesis when DNA polymerase encounters the 5'-end of a downstream Okazaki fragment. In Salmonella heidelberg (strain SL476), this protein is Flap endonuclease Xni.